The sequence spans 1407 residues: MMSFSKNATPRAIVSESSTLHEMKFRNFRVAHEKISLDIDLATHCITGSATIIIIPLIQNLEYVTFDCKEMTIKDVLVENRRCDQFIHDDPLQTNLNGLTSQNVLYSDNSIEQSHFLRSKFASLNEYPETDSKSQLTIKIPSSIKISLEDANALSNYTPITPSIKTTPGFQESVFTPITLQIEYEIRNPKSGIKFDTVYADKPWLWNVYTSNGEICSSASYWVPCVDLLDEKSTWELEFSVPRLVKNIGTSKLIGQNGEESEKEKEDTPEHDEEEEGKPARVIKDEDKDSNLKNDEEGKNSKSKDAQDNDEEEEEGESDEEEEEGEEERRNIEESNNPSLRDVIVCCSEYSNIKELPHPIDLTKKKCIFQIINPVAPHHIGWAIGAFNSWSLPLISPPSVDAEDEVEEDKLRENVVDNVNDTMDDDIGSDIIPIQIFTLPTQETDELTVINSTVVCQKIIDFYSKEFGSYPFTCYSMVFLPTAPSKHMDFAALGICNTRLLYPLEVIDKAFSTTNELAWALANQWSCVNITPLDMNDYWCCLGIAGYMVFQVTKKLMGNNTYKYQLKRNSEAIVEQDFEKPPIGSTFTGSSRPISWSSKDLSFIQLKAPMILHILDRRMTKTERSFGMSRVLPKIFLQAMSGDLPNNSLTSSHFQHVCERVNKSKLENFFNEWVYGSGVPILRVTQRFNRKRMVIELGIRQVQDEELGHEKVVGEEGFFKSALDHLEHPDLNRTECFTGSMTIRIHEHDGTPYEHIVEIKDTFTKIDIQYNTKYRRLRKRGGGANDENGVENNNEEKPIVVDVNCLGNVYMSPEECSRFSLTEFNRTSESNELLKQNEAFEWIRIDSDLEWICQMHINQPDYMFSSQLRQDGDIEAQLEAIRYYEDVVVNGGVKSLVYSSILFRTAIDERYFFGIRLAACEALSKYVYDPDFTGGVKHLIQIFQILFCLEDSNIPKSNNFENPKLYFLQCNIPKYLAKVKNENGKCPKLVKQFLLDILVYNENGENKYSDDAYVRSLIENVVKVALNEYKDKAYMEKVKTQLLRYENLVNWLSSYESLIKTTIMYAKYKLHKVGAYDFTELTGMIMHTLTLGINNGDISRESFQNEFLMVLKIMLLEGGLKNKDALVLFTEILCFHEDSYIRDKSVDVLSECVNLVVMDGSLDTISDDIKSSVQSVHNEVKNIKSEDDIELFLSGHYVDDMKIKIEKIGRQNISGLIQICRDMFKGYSPLKILLWDVLNLPVLSLYQRKQIHDLVRVMYTLINSFVVRLETPRERRLVAKMNSNEEGKLDIVIKRESILKVHIKKEVTSTVEAPKKANKIKISLKGDKPVRKVEKQIVKPKVTSKQRKVKSHVNRMGSLPLRFVKIQQQPRVMVHLSSVPYSQFVQITKVTSRSFMVKIRTKNDAKN.

Residues threonine 158 and threonine 161 each carry the phosphothreonine modification. Serine 163 is subject to Phosphoserine. The segment at 252 to 336 (KLIGQNGEES…EERRNIEESN (85 aa)) is disordered. A compositionally biased stretch (basic and acidic residues) spans 277–307 (GKPARVIKDEDKDSNLKNDEEGKNSKSKDAQ). A coiled-coil region spans residues 304–337 (KDAQDNDEEEEEGESDEEEEEGEEERRNIEESNN). Positions 308 to 326 (DNDEEEEEGESDEEEEEGE) are enriched in acidic residues. Residue serine 318 is modified to Phosphoserine. The tract at residues 1285–1350 (EEGKLDIVIK…KVTSKQRKVK (66 aa)) is highly charged.

It belongs to the TAF2 family. As to quaternary structure, the 1.2 MDa TFIID complex is composed of TATA binding protein (TBP) and the 14 TBP-associated factors. One copy of each TAF1, TAF2, TAF3, TAF7, TAF8, TAF11, TAF13, two copies of each TAF4, TAF5, TAF6, TAF9, TAF10, TAF12, and three copies of TAF14.

The protein localises to the nucleus. Functions as a component of the DNA-binding general transcription factor complex TFIID. Binding of TFIID to a promoter (with or without TATA element) is the initial step in pre-initiation complex (PIC) formation. TFIID plays a key role in the regulation of gene expression by RNA polymerase II through different activities such as transcription activator interaction, core promoter recognition and selectivity, TFIIA and TFIIB interaction, chromatin modification (histone acetylation by TAF1), facilitation of DNA opening and initiation of transcription. The polypeptide is Transcription initiation factor TFIID subunit 2 (TAF2) (Saccharomyces cerevisiae (strain ATCC 204508 / S288c) (Baker's yeast)).